Here is a 37-residue protein sequence, read N- to C-terminus: Large ribosomal subunit protein bL36c (37 aa).

The protein belongs to the bacterial ribosomal protein bL36 family.

It is found in the plastid. The protein localises to the chloroplast. This Porphyra purpurea (Red seaweed) protein is Large ribosomal subunit protein bL36c (rpl36).